Reading from the N-terminus, the 530-residue chain is Histone-arginine methyltransferase CARMER (530 aa).

Residues 141–450 form the SAM-dependent MTase PRMT-type domain; the sequence is ASQYFQFYGY…QSYDVTIDLH (310 aa). The S-adenosyl-L-methionine site is built by Gln154, Arg163, Gly187, Glu209, Glu238, and Thr266. An Asymmetric dimethylarginine; by autocatalysis modification is found at Arg501.

This sequence belongs to the class I-like SAM-binding methyltransferase superfamily. Protein arginine N-methyltransferase family. In terms of assembly, homodimer. Post-translationally, the dimethylated protein is the major form.

It localises to the cytoplasm. The protein resides in the nucleus. It carries out the reaction L-arginyl-[protein] + 2 S-adenosyl-L-methionine = N(omega),N(omega)-dimethyl-L-arginyl-[protein] + 2 S-adenosyl-L-homocysteine + 2 H(+). Functionally, methylates (mono- and asymmetric dimethylation) the guanidino nitrogens of arginyl residues in proteins. May methylate histone H3 at 'Arg-17' and activate transcription via chromatin remodeling. The chain is Histone-arginine methyltransferase CARMER (Art4) from Drosophila sechellia (Fruit fly).